The chain runs to 274 residues: 2,3,4,5-tetrahydropyridine-2,6-dicarboxylate N-succinyltransferase (274 aa).

Substrate is bound by residues Arg-106 and Asp-143.

Belongs to the transferase hexapeptide repeat family. In terms of assembly, homotrimer.

The protein resides in the cytoplasm. It carries out the reaction (S)-2,3,4,5-tetrahydrodipicolinate + succinyl-CoA + H2O = (S)-2-succinylamino-6-oxoheptanedioate + CoA. It participates in amino-acid biosynthesis; L-lysine biosynthesis via DAP pathway; LL-2,6-diaminopimelate from (S)-tetrahydrodipicolinate (succinylase route): step 1/3. This chain is 2,3,4,5-tetrahydropyridine-2,6-dicarboxylate N-succinyltransferase, found in Acidovorax ebreus (strain TPSY) (Diaphorobacter sp. (strain TPSY)).